The primary structure comprises 1009 residues: Kinesin-like protein KIN-5C (1009 aa).

One can recognise a Kinesin motor domain in the interval 12–359; sequence NVQVLLRCRP…LDYAHRAKNI (348 aa). 98–105 is an ATP binding site; the sequence is GQTGTGKT. Residues 406 to 526 adopt a coiled-coil conformation; it reads YQEESERKVM…NSSLHQKIGR (121 aa). Disordered stretches follow at residues 862–882 and 987–1009; these read SNEQ…KDVT and YESF…SQVN. Composition is skewed to basic and acidic residues over residues 863 to 882 and 987 to 996; these read NEQH…KDVT and YESFATKETK. The segment covering 997-1009 has biased composition (polar residues); it reads PQQLTRSPLSQVN.

This sequence belongs to the TRAFAC class myosin-kinesin ATPase superfamily. Kinesin family. KIN-5/BimC subfamily.

The protein localises to the cytoplasm. It localises to the cytoskeleton. It is found in the spindle. Its function is as follows. Responsible for microtubule translocation. May be important for the organization of phragmoplast-specific arrays of microtubules. Plays an essential role in stabilizing the mitotic spindle. Required during mitotic cytokinesis. This is Kinesin-like protein KIN-5C from Arabidopsis thaliana (Mouse-ear cress).